We begin with the raw amino-acid sequence, 451 residues long: Chromosomal replication initiator protein DnaA (451 aa).

The interval 1 to 94 (MKPDLSSLWQ…KPEPKPAQPS (94 aa)) is domain I, interacts with DnaA modulators. A disordered region spans residues 87-106 (EPKPAQPSALPTHHNKEENK). Positions 95 to 113 (ALPTHHNKEENKPQTVIRS) are domain II. The interval 114–331 (YLNPKHVFEN…GALNRVSANA (218 aa)) is domain III, AAA+ region. Residues Gly159, Gly161, Lys162, and Thr163 each coordinate ATP. Positions 332–451 (EFMGAAITID…WSNLIRTLSV (120 aa)) are domain IV, binds dsDNA.

Belongs to the DnaA family. As to quaternary structure, oligomerizes as a right-handed, spiral filament on DNA at oriC.

It localises to the cytoplasm. Functionally, plays an essential role in the initiation and regulation of chromosomal replication. ATP-DnaA binds to the origin of replication (oriC) to initiate formation of the DNA replication initiation complex once per cell cycle. Binds the DnaA box (a 9 base pair repeat at the origin) and separates the double-stranded (ds)DNA. Forms a right-handed helical filament on oriC DNA; dsDNA binds to the exterior of the filament while single-stranded (ss)DNA is stabiized in the filament's interior. The ATP-DnaA-oriC complex binds and stabilizes one strand of the AT-rich DNA unwinding element (DUE), permitting loading of DNA polymerase. After initiation quickly degrades to an ADP-DnaA complex that is not apt for DNA replication. Binds acidic phospholipids. This Pasteurella multocida (strain Pm70) protein is Chromosomal replication initiator protein DnaA.